Here is a 3483-residue protein sequence, read N- to C-terminus: Nonribosomal peptide synthetase Ao415 (3483 aa).

Residues T281–V669 are adenylation 1. In terms of domain architecture, Carrier 1 spans E775–K851. At S812 the chain carries O-(pantetheine 4'-phosphoryl)serine. The interval A886–Q1297 is condensation 1. The interval T1363–V1758 is adenylation 2. A Carrier 2 domain is found at E1865–N1941. S1901 is subject to O-(pantetheine 4'-phosphoryl)serine. Residues I1981–A2379 are condensation 2. Positions T2412–K2485 constitute a Carrier 3 domain. An O-(pantetheine 4'-phosphoryl)serine modification is found at S2446. Residues E2520 to L2917 form a condensation 3 region. The region spanning D2954–Q3030 is the Carrier 4 domain. Residue S2991 is modified to O-(pantetheine 4'-phosphoryl)serine. The interval S3084–T3368 is condensation 4.

Belongs to the NRP synthetase family.

It functions in the pathway siderophore biosynthesis. Nonribosomal peptide synthetase; part of the gene cluster that mediates the biosynthesis of desferriferrichrome that chelates Fe(3+) to form ferrichrome. Fe(3+) is a key factor for induction of trap formation and the fungus uses the iron chelating desferriferrichrome to sequester Fe(3+) to inhibit trap formation and increase nematicidal activity. The biosynthesis of desferriferrichrome requires the action of the L-ornithine N(5)-oxygenase (LOO) Ao414 that hydroxylates L-ornithine at N(5), resulting in the formation of N(5)-hydroxyl-L-ornithine, which is subsequently N-acetylated to yield N(5)-acetyl-N(5)-hydroxy-L-ornithine (L-AHO). L-AHO harbors one hydroxamate moiety, which is the key core responsible for chelating iron. Then, L-AHO is further condensated with glycines to form desferriferrichrome through the NRPS protein Ao415. This chain is Nonribosomal peptide synthetase Ao415, found in Arthrobotrys oligospora (strain ATCC 24927 / CBS 115.81 / DSM 1491) (Nematode-trapping fungus).